Here is a 398-residue protein sequence, read N- to C-terminus: 1-deoxy-D-xylulose 5-phosphate reductoisomerase (398 aa).

Positions 10, 11, 12, 13, 38, and 124 each coordinate NADPH. Residue Lys-125 participates in 1-deoxy-D-xylulose 5-phosphate binding. Glu-126 contributes to the NADPH binding site. Position 150 (Asp-150) interacts with Mn(2+). 4 residues coordinate 1-deoxy-D-xylulose 5-phosphate: Ser-151, Glu-152, Ser-186, and His-209. Mn(2+) is bound at residue Glu-152. NADPH is bound at residue Gly-215. Residues Ser-222, Asn-227, Lys-228, and Glu-231 each contribute to the 1-deoxy-D-xylulose 5-phosphate site. Glu-231 is a Mn(2+) binding site.

The protein belongs to the DXR family. Requires Mg(2+) as cofactor. It depends on Mn(2+) as a cofactor.

It catalyses the reaction 2-C-methyl-D-erythritol 4-phosphate + NADP(+) = 1-deoxy-D-xylulose 5-phosphate + NADPH + H(+). It functions in the pathway isoprenoid biosynthesis; isopentenyl diphosphate biosynthesis via DXP pathway; isopentenyl diphosphate from 1-deoxy-D-xylulose 5-phosphate: step 1/6. Catalyzes the NADPH-dependent rearrangement and reduction of 1-deoxy-D-xylulose-5-phosphate (DXP) to 2-C-methyl-D-erythritol 4-phosphate (MEP). The chain is 1-deoxy-D-xylulose 5-phosphate reductoisomerase from Baumannia cicadellinicola subsp. Homalodisca coagulata.